A 413-amino-acid chain; its full sequence is Inactive serine protease 35 (413 aa).

The signal sequence occupies residues 1-16; it reads MENMLLWLIFFTPGWT. N-linked (GlcNAc...) asparagine glycosylation occurs at N90. A Peptidase S1 domain is found at 124 to 408; sequence VYGTDSRFSI…ICLWIHGNDA (285 aa). A disulfide bond links C154 and C170. Basic residues predominate over residues 191-207; that stretch reads MRNKSGGKKRRGSKRSR. The interval 191 to 250 is disordered; it reads MRNKSGGKKRRGSKRSRREASGGDQREGTREHLRERAKGGRRRKKSGRGQRIAEGRPSFQ. Residues 208-228 show a composition bias toward basic and acidic residues; it reads REASGGDQREGTREHLRERAK. Positions 229 to 238 are enriched in basic residues; the sequence is GGRRRKKSGR.

This sequence belongs to the peptidase S1 family.

The protein resides in the secreted. The chain is Inactive serine protease 35 (PRSS35) from Homo sapiens (Human).